We begin with the raw amino-acid sequence, 181 residues long: Sodium/potassium-transporting ATPase subunit beta-1-interacting protein 3 (181 aa).

4 helical membrane passes run 5–22 (TGRC…LVAL), 35–55 (APIL…FGTI), 62–82 (IVAY…IICF), and 151–171 (AVQI…ISVI).

Belongs to the NKAIN family. As to quaternary structure, interacts with atp1b1 C-terminus.

It is found in the cell membrane. The protein is Sodium/potassium-transporting ATPase subunit beta-1-interacting protein 3 (nkain3) of Xenopus tropicalis (Western clawed frog).